The chain runs to 274 residues: S-adenosylmethionine-dependent nucleotide dehydratase (274 aa).

The Radical SAM core domain occupies M1–D215. Residues C13, C17, and C20 each coordinate [4Fe-4S] cluster.

This sequence belongs to the radical SAM superfamily. Prokaryotic viperin family. The cofactor is [4Fe-4S] cluster.

The enzyme catalyses CTP + AH2 + S-adenosyl-L-methionine = 3'-deoxy-3',4'-didehydro-CTP + 5'-deoxyadenosine + L-methionine + A + H2O + H(+). In terms of biological role, expression of pVip6 in E.coli (strain MG1655) confers resistance to phages lambda, P1, SECphi6, SECphi8 and T7. Catalyzes the conversion of cytidine triphosphate (CTP) to 3'-deoxy-3',4'-didehydro-CTP (ddhCTP), probably via a SAM-dependent radical mechanism. The modified nucleotide represses transcription from T7 RNA polymerase-directed genes (possibly by acting as chain terminators), strongly suggesting these nucleotides block viral polymerase transcription. The chain is S-adenosylmethionine-dependent nucleotide dehydratase from Selenomonas ruminantium.